We begin with the raw amino-acid sequence, 177 residues long: Dual-action ribosomal maturation protein DarP (177 aa).

It belongs to the DarP family.

It localises to the cytoplasm. Functionally, member of a network of 50S ribosomal subunit biogenesis factors which assembles along the 30S-50S interface, preventing incorrect 23S rRNA structures from forming. Promotes peptidyl transferase center (PTC) maturation. This chain is Dual-action ribosomal maturation protein DarP, found in Histophilus somni (strain 129Pt) (Haemophilus somnus).